Reading from the N-terminus, the 487-residue chain is Inosine-5'-monophosphate dehydrogenase (487 aa).

2 consecutive CBS domains span residues 93–152 and 153–214; these read VVTE…VTAV and MTPK…CKDE. NAD(+)-binding positions include aspartate 248, 248–250, and 298–300; these read DSS and GIG. 2 residues coordinate K(+): glycine 300 and glycine 302. Position 303 (serine 303) interacts with IMP. Residue cysteine 305 coordinates K(+). Catalysis depends on cysteine 305, which acts as the Thioimidate intermediate. IMP-binding positions include 338-340, 361-362, and 385-389; these read DGG, GS, and YRGMG. Arginine 401 acts as the Proton acceptor in catalysis. IMP is bound at residue glutamate 415. 3 residues coordinate K(+): glutamate 469, serine 470, and histidine 471.

It belongs to the IMPDH/GMPR family. Homotetramer. The cofactor is K(+).

It carries out the reaction IMP + NAD(+) + H2O = XMP + NADH + H(+). It functions in the pathway purine metabolism; XMP biosynthesis via de novo pathway; XMP from IMP: step 1/1. Mycophenolic acid (MPA) is a non-competitive inhibitor that prevents formation of the closed enzyme conformation by binding to the same site as the amobile flap. In contrast, mizoribine monophosphate (MZP) is a competitive inhibitor that induces the closed conformation. MPA is a potent inhibitor of mammalian IMPDHs but a poor inhibitor of the bacterial enzymes. MZP is a more potent inhibitor of bacterial IMPDH. Functionally, catalyzes the conversion of inosine 5'-phosphate (IMP) to xanthosine 5'-phosphate (XMP), the first committed and rate-limiting step in the de novo synthesis of guanine nucleotides, and therefore plays an important role in the regulation of cell growth. This is Inosine-5'-monophosphate dehydrogenase from Yersinia pestis.